Consider the following 309-residue polypeptide: Protein FdhE (309 aa).

Belongs to the FdhE family.

The protein localises to the cytoplasm. Functionally, necessary for formate dehydrogenase activity. This Salmonella arizonae (strain ATCC BAA-731 / CDC346-86 / RSK2980) protein is Protein FdhE.